Reading from the N-terminus, the 276-residue chain is Type II pantothenate kinase (276 aa).

Asp-8–Lys-15 lines the ATP pocket. The active-site Proton acceptor is Glu-76. Residues Thr-105, Gly-127–Met-131, Phe-143, and Ser-230 contribute to the ATP site.

The protein belongs to the type II pantothenate kinase family. As to quaternary structure, homodimer.

It localises to the cytoplasm. The enzyme catalyses (R)-pantothenate + ATP = (R)-4'-phosphopantothenate + ADP + H(+). The protein operates within cofactor biosynthesis; coenzyme A biosynthesis; CoA from (R)-pantothenate: step 1/5. In terms of biological role, catalyzes the phosphorylation of pantothenate (Pan), the first step in CoA biosynthesis. In Bacillus cereus (strain AH820), this protein is Type II pantothenate kinase.